The primary structure comprises 419 residues: Cytosine permease (419 aa).

Topologically, residues 1–19 (MSQDNNFSQGPVPQSARKG) are cytoplasmic. The helical transmembrane segment at 20–39 (VLALTFVMLGLTFFSASMWT) threads the bilayer. At 40 to 51 (GGTLGTGLSYHD) the chain is on the periplasmic side. Residues 52-71 (FFLAVLIGNLLLGIYTSFLG) traverse the membrane as a helical segment. The Cytoplasmic segment spans residues 72 to 100 (YIGAKTGLTTHLLARFSFGVKGSWLPSLL). A helical membrane pass occupies residues 101–120 (LGGTQVGWFGVGVAMFAIPV). Residues 121-127 (GKATGLD) lie on the Periplasmic side of the membrane. A helical transmembrane segment spans residues 128–147 (INLLIAVSGLLMTVTVFFGI). At 148 to 152 (SALTV) the chain is on the cytoplasmic side. A helical membrane pass occupies residues 153-172 (LSVIAVPAIACLGGYSVWLA). Residues 173–192 (VNGMGGLDALKAVVPAQPLD) lie on the Periplasmic side of the membrane. The helical transmembrane segment at 193–212 (FNVALALVVGSFISAGTLTA) threads the bilayer. The Cytoplasmic portion of the chain corresponds to 213-221 (DFVRFGRNA). The helical transmembrane segment at 222–242 (KLAVLVAMVAFFLGNSLMFIF) threads the bilayer. At 243-257 (GAAGAAALGMADISD) the chain is on the periplasmic side. The helical transmembrane segment at 258–277 (VMIAQGLLLPAIVVLGLNIW) threads the bilayer. Over 278–300 (TTNDNALYASGLGFANITGMSSK) the chain is Cytoplasmic. A helical membrane pass occupies residues 301–320 (TLSVINGIIGTVCALWLYNN). Residue Phe321 is a topological domain, periplasmic. A helical membrane pass occupies residues 322-341 (VGWLTFLSAAIPPVGGVIIA). At 342 to 358 (DYLMNRRRYEHFATTRM) the chain is on the cytoplasmic side. A helical transmembrane segment spans residues 359 to 378 (MSVNWVAILAVALGIAAGHW). Over 379–380 (LP) the chain is Periplasmic. A helical transmembrane segment spans residues 381–400 (GIVPVNAVLGGALSYLILNP). Over 401–419 (ILNRKTTAAMTHVEANSVE) the chain is Cytoplasmic.

The protein belongs to the purine-cytosine permease (2.A.39) family.

It localises to the cell inner membrane. In terms of biological role, required for cytosine transport into the cell. In Escherichia coli O6:H1 (strain CFT073 / ATCC 700928 / UPEC), this protein is Cytosine permease (codB).